The sequence spans 38 residues: Potassium channel toxin alpha-KTx 3.3 (38 aa).

3 cysteine pairs are disulfide-bonded: Cys8-Cys28, Cys14-Cys33, and Cys18-Cys35. The interaction with Ca(2+)-activated K(+) channels stretch occupies residues 26–33 (GKCMNRKC).

This sequence belongs to the short scorpion toxin superfamily. Potassium channel inhibitor family. Alpha-KTx 03 subfamily. In terms of tissue distribution, expressed by the venom gland.

It localises to the secreted. In terms of biological role, potent inhibitor of shaker potassium channels as well as the mammalian homologs of shaker. In Leiurus hebraeus (Hebrew deathstalker scorpion), this protein is Potassium channel toxin alpha-KTx 3.3.